Consider the following 377-residue polypeptide: Metallo-hydrolase mfmC (377 aa).

Positions 126, 128, 130, 131, 209, and 233 each coordinate Zn(2+).

The protein belongs to the metallo-beta-lactamase superfamily.

It participates in secondary metabolite biosynthesis; terpenoid biosynthesis. Functionally, metallo-hydrolase; part of the gene cluster that mediates the biosynthesis of the phthalide-terpenoid hybrid 11'-O-desmethylfendlerol. Within the pathway, mfma and mfmC act together to convert 3,5-dimethylorsellinic acid (DMOA) into the phthalide 5,7-dihydroxy-4-(hydroxymethyl)-6-methylphthalide. The biosynthesis of 11'-O-desmethylfendlerol begins with the NR-PKS mfmB that forms 3,5-dimethylorsellinic acid (DMOA), which is then transformed into the phthalide 5,7-dihydroxy-4-(hydroxymethyl)-6-methylphthalide by the cytochrome P450 monooxygenase mfmA and the hydrolase mfmC. Subsequently, the methyltransferase mfmE catalyzes 7-O-methylation to yield 5-hydroxy-4-(hydroxymethyl)-7-methoxy-6-methylphthalide, which undergoes C-3 hydroxylation by the cytochrome P450 monooxygenase mfmF. The resultant cyclopolic acid (2,5-dihydroxy-4-(hydroxymethyl)-7-methoxy-6-methylphthalide) is then farnesylated by the DMATS-type prenyltransferase mfmD to afford 5-O-farnesylcyclopolic acid. Finally, the Pyr4-family terpene cyclase mfmH cyclizes the farnesyl moiety of 5-O-farnesylcyclopolic acid into a drimane-like structure, thus completing the biosynthesis of 11'-O-desmethylfendlerol. This Annulohypoxylon moriforme (Filamentous fungus) protein is Metallo-hydrolase mfmC.